The chain runs to 476 residues: NADP-dependent glyceraldehyde-3-phosphate dehydrogenase (476 aa).

Arg103 lines the substrate pocket. Ser151 provides a ligand contact to NADP(+). 154-155 (NY) contacts substrate. NADP(+)-binding positions include Lys177, Thr180, Asp215, and 230-251 (GSTP…MLEL). Catalysis depends on residues Glu250 and Cys284. A substrate-binding site is contributed by 283–285 (RCT). Residue Glu377 participates in NADP(+) binding. Arg437 lines the substrate pocket.

This sequence belongs to the aldehyde dehydrogenase family. In terms of assembly, homotetramer.

It carries out the reaction D-glyceraldehyde 3-phosphate + NADP(+) + H2O = (2R)-3-phosphoglycerate + NADPH + 2 H(+). Catalyzes the irreversible NADP-dependent oxidation of glyceraldehyde-3-phosphate to 3-phosphoglycerate. Is not able to use NAD instead of NADP. May play an important role in NADPH production in S.equinus. The sequence is that of NADP-dependent glyceraldehyde-3-phosphate dehydrogenase (gapN) from Streptococcus equinus (Streptococcus bovis).